We begin with the raw amino-acid sequence, 539 residues long: Chaperonin GroEL (539 aa).

Residues 29-32, 86-90, Gly-413, 476-478, and Asp-492 contribute to the ATP site; these read TLGP, DGTTT, and NAA.

This sequence belongs to the chaperonin (HSP60) family. Forms a cylinder of 14 subunits composed of two heptameric rings stacked back-to-back. Interacts with the co-chaperonin GroES.

The protein resides in the cytoplasm. The catalysed reaction is ATP + H2O + a folded polypeptide = ADP + phosphate + an unfolded polypeptide.. Functionally, together with its co-chaperonin GroES, plays an essential role in assisting protein folding. The GroEL-GroES system forms a nano-cage that allows encapsulation of the non-native substrate proteins and provides a physical environment optimized to promote and accelerate protein folding. The protein is Chaperonin GroEL of Parageobacillus thermoglucosidasius (Geobacillus thermoglucosidasius).